The chain runs to 295 residues: Diaminopimelate epimerase (295 aa).

Substrate-binding residues include Asn-11 and Asn-67. The active-site Proton donor is the Cys-76. Residues Gly-77–Asn-78, Asn-171, Asn-210, and Glu-228–Arg-229 each bind substrate. Cys-237 (proton acceptor) is an active-site residue. Gly-238 to Thr-239 provides a ligand contact to substrate.

It belongs to the diaminopimelate epimerase family. In terms of assembly, homodimer.

Its subcellular location is the cytoplasm. The enzyme catalyses (2S,6S)-2,6-diaminopimelate = meso-2,6-diaminopimelate. The protein operates within amino-acid biosynthesis; L-lysine biosynthesis via DAP pathway; DL-2,6-diaminopimelate from LL-2,6-diaminopimelate: step 1/1. Its function is as follows. Catalyzes the stereoinversion of LL-2,6-diaminopimelate (L,L-DAP) to meso-diaminopimelate (meso-DAP), a precursor of L-lysine. The sequence is that of Diaminopimelate epimerase from Methanocaldococcus jannaschii (strain ATCC 43067 / DSM 2661 / JAL-1 / JCM 10045 / NBRC 100440) (Methanococcus jannaschii).